Reading from the N-terminus, the 4092-residue chain is Dynein heavy chain, cytoplasmic (4092 aa).

Positions 1–1757 (MCKNEARLAN…FISQSGYLLQ (1757 aa)) are stem. 6 coiled-coil regions span residues 154-175 (VETI…QQLH), 486-508 (KLEQ…LQNT), 542-566 (KVLE…TGLE), 932-959 (VIKL…YVKE), 1042-1063 (YERD…VEDM), and 1681-1705 (KGLL…LVEY). AAA regions lie at residues 1758-1979 (YKFE…VLRN), 2036-2273 (QCLK…NDLV), 2379-2628 (SLEA…LVRG), and 2722-2984 (TFCD…KVGV). ATP is bound by residues 1796 to 1803 (GPAGTGKT), 2074 to 2081 (GKAGCGKT), 2418 to 2425 (GPPGSGKT), and 2760 to 2767 (GASRTGKT). Coiled-coil stretches lie at residues 2993–3092 (IDGL…KRKE), 3242–3300 (KTKA…KSLT), and 3532–3608 (ITLT…EEFF). A stalk region spans residues 2993–3300 (IDGLRALVKL…RSISLVKSLT (308 aa)). AAA stretches follow at residues 3370–3599 (LVTL…NIEK) and 3760–3970 (LNWF…YLEN).

It belongs to the dynein heavy chain family. As to quaternary structure, the dynein complex consists of at least two heavy chains and a number of intermediate and light chains. Interacts with DYN3.

It localises to the cytoplasm. Its subcellular location is the cytoskeleton. Cytoplasmic dynein acts as a motor for the intracellular retrograde motility of vesicles and organelles along microtubules. Dynein has ATPase activity; the force-producing power stroke is thought to occur on release of ADP. Required to maintain uniform nuclear distribution in hyphae. May play an important role in the proper orientation of the mitotic spindle into the budding daughter cell yeast. Probably required for normal progression of the cell cycle. This is Dynein heavy chain, cytoplasmic (DYN1) from Saccharomyces cerevisiae (strain ATCC 204508 / S288c) (Baker's yeast).